The chain runs to 424 residues: UPF0229 protein Avin_46880 (424 aa).

A disordered region spans residues 57 to 108 (RDIDEPVLHHGRGGKQTIVHPGNKEFTAGERIPRPSGGGGGGSGSGKASNSG). The span at 92–101 (SGGGGGGSGS) shows a compositional bias: gly residues.

This sequence belongs to the UPF0229 family.

The chain is UPF0229 protein Avin_46880 from Azotobacter vinelandii (strain DJ / ATCC BAA-1303).